The chain runs to 260 residues: Large ribosomal subunit protein uL2y (260 aa).

The disordered stretch occupies residues 227–248 (RRDKSAGAKVGQIAARRTGRRR).

The protein belongs to the universal ribosomal protein uL2 family.

This is Large ribosomal subunit protein uL2y (RPL8B) from Arabidopsis thaliana (Mouse-ear cress).